An 83-amino-acid chain; its full sequence is Putative membrane protein insertion efficiency factor (83 aa).

Residues 62-83 (KGGYDPVPPKSVKSAGNSKDSK) are disordered.

The protein belongs to the UPF0161 family.

It localises to the cell inner membrane. Functionally, could be involved in insertion of integral membrane proteins into the membrane. This is Putative membrane protein insertion efficiency factor from Chlorobaculum tepidum (strain ATCC 49652 / DSM 12025 / NBRC 103806 / TLS) (Chlorobium tepidum).